Consider the following 283-residue polypeptide: Bifunctional protein FolD (283 aa).

Residues 165–167 (GRS), serine 190, and threonine 231 each bind NADP(+).

This sequence belongs to the tetrahydrofolate dehydrogenase/cyclohydrolase family. Homodimer.

It catalyses the reaction (6R)-5,10-methylene-5,6,7,8-tetrahydrofolate + NADP(+) = (6R)-5,10-methenyltetrahydrofolate + NADPH. The catalysed reaction is (6R)-5,10-methenyltetrahydrofolate + H2O = (6R)-10-formyltetrahydrofolate + H(+). It functions in the pathway one-carbon metabolism; tetrahydrofolate interconversion. Its function is as follows. Catalyzes the oxidation of 5,10-methylenetetrahydrofolate to 5,10-methenyltetrahydrofolate and then the hydrolysis of 5,10-methenyltetrahydrofolate to 10-formyltetrahydrofolate. In Nocardia farcinica (strain IFM 10152), this protein is Bifunctional protein FolD.